A 452-amino-acid chain; its full sequence is Tissue alpha-L-fucosidase (452 aa).

The first 17 residues, 1–17 (MLLLLLLLLVAAAQAVA), serve as a signal peptide directing secretion. 4 N-linked (GlcNAc...) asparagine glycosylation sites follow: asparagine 227, asparagine 254, asparagine 368, and asparagine 378.

Belongs to the glycosyl hydrolase 29 family. As to quaternary structure, homotetramer.

It localises to the lysosome. The enzyme catalyses an alpha-L-fucoside + H2O = L-fucose + an alcohol. The catalysed reaction is a neolactoside IV(2)-alpha-Fuc-nLc4Cer(d18:1(4E)) + H2O = a neolactoside nLc4Cer(d18:1(4E)) + L-fucose. It carries out the reaction a neolactoside IV(2)-alpha-Fuc-nLc4Cer(d18:0) + H2O = a neolactoside nLc4Cer(d18:0) + L-fucose. Alpha-L-fucosidase is responsible for hydrolyzing the alpha-1,6-linked fucose joined to the reducing-end N-acetylglucosamine of the carbohydrate moieties of glycoproteins. The protein is Tissue alpha-L-fucosidase (Fuca1) of Mus musculus (Mouse).